A 490-amino-acid polypeptide reads, in one-letter code: Argininosuccinate lyase (490 aa).

It belongs to the lyase 1 family. Argininosuccinate lyase subfamily.

It is found in the cytoplasm. It catalyses the reaction 2-(N(omega)-L-arginino)succinate = fumarate + L-arginine. It participates in amino-acid biosynthesis; L-arginine biosynthesis; L-arginine from L-ornithine and carbamoyl phosphate: step 3/3. This Bifidobacterium longum subsp. infantis (strain ATCC 15697 / DSM 20088 / JCM 1222 / NCTC 11817 / S12) protein is Argininosuccinate lyase.